The following is a 428-amino-acid chain: Histidine--tRNA ligase (428 aa).

Belongs to the class-II aminoacyl-tRNA synthetase family. Homodimer.

It localises to the cytoplasm. The catalysed reaction is tRNA(His) + L-histidine + ATP = L-histidyl-tRNA(His) + AMP + diphosphate + H(+). The protein is Histidine--tRNA ligase of Mesomycoplasma hyopneumoniae (strain 232) (Mycoplasma hyopneumoniae).